The sequence spans 99 residues: Nucleoid-associated protein EbfC (99 aa).

The protein belongs to the YbaB/EbfC family. As to quaternary structure, homodimer.

The protein localises to the cytoplasm. The protein resides in the nucleoid. In terms of biological role, binds to DNA and alters its conformation. May be involved in regulation of gene expression, nucleoid organization and DNA protection. This is Nucleoid-associated protein EbfC from Borreliella burgdorferi (strain ZS7) (Borrelia burgdorferi).